Reading from the N-terminus, the 148-residue chain is Large ribosomal subunit protein bL9 (148 aa).

The protein belongs to the bacterial ribosomal protein bL9 family.

Binds to the 23S rRNA. This chain is Large ribosomal subunit protein bL9, found in Frankia casuarinae (strain DSM 45818 / CECT 9043 / HFP020203 / CcI3).